The chain runs to 292 residues: tRNA pseudouridine synthase B (292 aa).

Catalysis depends on Asp38, which acts as the Nucleophile.

This sequence belongs to the pseudouridine synthase TruB family. Type 1 subfamily.

The catalysed reaction is uridine(55) in tRNA = pseudouridine(55) in tRNA. Responsible for synthesis of pseudouridine from uracil-55 in the psi GC loop of transfer RNAs. In Streptococcus pneumoniae serotype 4 (strain ATCC BAA-334 / TIGR4), this protein is tRNA pseudouridine synthase B.